The sequence spans 98 residues: Integration host factor subunit beta (98 aa).

Belongs to the bacterial histone-like protein family. In terms of assembly, heterodimer of an alpha and a beta chain.

Its function is as follows. This protein is one of the two subunits of integration host factor, a specific DNA-binding protein that functions in genetic recombination as well as in transcriptional and translational control. The sequence is that of Integration host factor subunit beta from Pseudomonas putida (strain GB-1).